The sequence spans 529 residues: Chaperonin GroEL, chloroplastic (529 aa).

ATP is bound by residues 29–32, 86–90, Gly-414, 480–482, and Asp-496; these read TLGP, DGTTT, and DAA.

The protein belongs to the chaperonin (HSP60) family. Forms a cylinder of 14 subunits composed of two heptameric rings stacked back-to-back. Interacts with the co-chaperonin GroES.

Its subcellular location is the plastid. The protein localises to the chloroplast. The catalysed reaction is ATP + H2O + a folded polypeptide = ADP + phosphate + an unfolded polypeptide.. Together with its co-chaperonin GroES, plays an essential role in assisting protein folding. The GroEL-GroES system forms a nano-cage that allows encapsulation of the non-native substrate proteins and provides a physical environment optimized to promote and accelerate protein folding. The polypeptide is Chaperonin GroEL, chloroplastic (Guillardia theta (Cryptophyte)).